Consider the following 145-residue polypeptide: Deoxyuridine 5'-triphosphate nucleotidohydrolase (145 aa).

Substrate is bound by residues Arg63–Gly65, Asn76, Thr80–Asp82, and Lys90.

This sequence belongs to the dUTPase family. It depends on Mg(2+) as a cofactor.

The enzyme catalyses dUTP + H2O = dUMP + diphosphate + H(+). Its pathway is pyrimidine metabolism; dUMP biosynthesis; dUMP from dCTP (dUTP route): step 2/2. In terms of biological role, this enzyme is involved in nucleotide metabolism: it produces dUMP, the immediate precursor of thymidine nucleotides and it decreases the intracellular concentration of dUTP so that uracil cannot be incorporated into DNA. The polypeptide is Deoxyuridine 5'-triphosphate nucleotidohydrolase (Clostridium acetobutylicum (strain ATCC 824 / DSM 792 / JCM 1419 / IAM 19013 / LMG 5710 / NBRC 13948 / NRRL B-527 / VKM B-1787 / 2291 / W)).